The following is a 247-amino-acid chain: Uridylate kinase (247 aa).

14–17 serves as a coordination point for ATP; the sequence is KLSG. Residues 22-27 form an involved in allosteric activation by GTP region; that stretch reads GERGVG. Residue G56 coordinates UMP. 2 residues coordinate ATP: G57 and R61. Residues D76 and 137 to 144 each bind UMP; that span reads IGSPYFST. Residues N165, Y171, and D174 each coordinate ATP.

Belongs to the UMP kinase family. In terms of assembly, homohexamer.

The protein localises to the cytoplasm. The catalysed reaction is UMP + ATP = UDP + ADP. The protein operates within pyrimidine metabolism; CTP biosynthesis via de novo pathway; UDP from UMP (UMPK route): step 1/1. With respect to regulation, allosterically activated by GTP. Inhibited by UTP. Its function is as follows. Catalyzes the reversible phosphorylation of UMP to UDP. The polypeptide is Uridylate kinase (Streptococcus pneumoniae (strain ATCC BAA-255 / R6)).